We begin with the raw amino-acid sequence, 257 residues long: 5'-nucleotidase SurE (257 aa).

Residues Asp11, Asp12, Ser42, and Asn99 each contribute to the a divalent metal cation site.

It belongs to the SurE nucleotidase family. Requires a divalent metal cation as cofactor.

The protein resides in the cytoplasm. The catalysed reaction is a ribonucleoside 5'-phosphate + H2O = a ribonucleoside + phosphate. In terms of biological role, nucleotidase that shows phosphatase activity on nucleoside 5'-monophosphates. The sequence is that of 5'-nucleotidase SurE from Flavobacterium psychrophilum (strain ATCC 49511 / DSM 21280 / CIP 103535 / JIP02/86).